Consider the following 531-residue polypeptide: Phosphomethylpyrimidine synthase (531 aa).

Substrate contacts are provided by residues Asn167, Met196, Tyr225, His261, 281-283, 322-325, and Glu361; these read SRG and DALR. His365 contributes to the Zn(2+) binding site. Tyr388 is a binding site for substrate. His429 serves as a coordination point for Zn(2+). Residues Cys511, Cys514, and Cys519 each contribute to the [4Fe-4S] cluster site.

This sequence belongs to the ThiC family. It depends on [4Fe-4S] cluster as a cofactor.

It catalyses the reaction 5-amino-1-(5-phospho-beta-D-ribosyl)imidazole + S-adenosyl-L-methionine = 4-amino-2-methyl-5-(phosphooxymethyl)pyrimidine + CO + 5'-deoxyadenosine + formate + L-methionine + 3 H(+). The protein operates within cofactor biosynthesis; thiamine diphosphate biosynthesis. In terms of biological role, catalyzes the synthesis of the hydroxymethylpyrimidine phosphate (HMP-P) moiety of thiamine from aminoimidazole ribotide (AIR) in a radical S-adenosyl-L-methionine (SAM)-dependent reaction. This chain is Phosphomethylpyrimidine synthase, found in Chlorobium chlorochromatii (strain CaD3).